We begin with the raw amino-acid sequence, 444 residues long: tRNA modification GTPase MnmE (444 aa).

Residues Arg-24, Glu-81, and Lys-121 each coordinate (6S)-5-formyl-5,6,7,8-tetrahydrofolate. The 151-residue stretch at 218–368 (GLTVVIAGPP…LLDALVGFAR (151 aa)) folds into the TrmE-type G domain. GTP-binding positions include 228-233 (NAGKST), 247-253 (SPQAGTT), 272-275 (DTAG), and 349-351 (SAR). Residues Ser-232 and Thr-253 each coordinate Mg(2+). Lys-444 serves as a coordination point for (6S)-5-formyl-5,6,7,8-tetrahydrofolate.

It belongs to the TRAFAC class TrmE-Era-EngA-EngB-Septin-like GTPase superfamily. TrmE GTPase family. Homodimer. Heterotetramer of two MnmE and two MnmG subunits. K(+) is required as a cofactor.

The protein resides in the cytoplasm. Its function is as follows. Exhibits a very high intrinsic GTPase hydrolysis rate. Involved in the addition of a carboxymethylaminomethyl (cmnm) group at the wobble position (U34) of certain tRNAs, forming tRNA-cmnm(5)s(2)U34. This chain is tRNA modification GTPase MnmE, found in Bradyrhizobium sp. (strain ORS 278).